The primary structure comprises 107 residues: High mobility group protein HMG-I/HMG-Y (107 aa).

The segment at methionine 1–glutamine 107 is disordered. The residue at position 2 (serine 2) is an N-acetylserine. Position 7 is an N6-acetyllysine (lysine 7). Serine 8 bears the ADP-ribosylserine mark. Serine 9 carries the ADP-ribosylserine; alternate modification. Serine 9 is modified (phosphoserine; alternate). N6-acetyllysine; alternate is present on lysine 15. Lysine 15 participates in a covalent cross-link: Glycyl lysine isopeptide (Lys-Gly) (interchain with G-Cter in SUMO2); alternate. A compositionally biased stretch (basic and acidic residues) spans lysine 15–arginine 24. The a.T hook 1 DNA-binding region spans threonine 21–lysine 31. Position 26 is an asymmetric dimethylarginine; alternate (arginine 26). Arginine 26 carries the omega-N-methylarginine; alternate modification. Position 26 is a symmetric dimethylarginine; alternate (arginine 26). A Phosphoserine; by HIPK2 and CDC2 modification is found at serine 36. Residue threonine 39 is modified to Phosphothreonine. Serine 44 and serine 49 each carry phosphoserine. Threonine 53 is modified (phosphothreonine; by HIPK2 and CDC2). DNA-binding regions (a.T hook) lie at residues threonine 53–glycine 63 and alanine 78–lysine 89. The interaction with HIPK2 stretch occupies residues threonine 53 to threonine 77. Basic residues predominate over residues lysine 55–lysine 74. Asymmetric dimethylarginine; by PRMT6; alternate is present on residues arginine 58 and arginine 60. 2 positions are modified to omega-N-methylarginine; by PRMT6; alternate: arginine 58 and arginine 60. A compositionally biased stretch (acidic residues) spans glutamate 93–glutamine 107. 3 positions are modified to phosphoserine: serine 99, serine 102, and serine 103.

It belongs to the HMGA family. As to quaternary structure, interacts with HIPK2. Post-translationally, isoforms HMG-I and HMG-Y can be phosphorylated by HIPK2. Phosphorylation may modulate DNA-binding affinity. Methylation at Arg-58 is mutually exclusive with methylation at Arg-60.

Its subcellular location is the nucleus. It is found in the chromosome. Functionally, HMG-I/Y bind preferentially to the minor groove of A+T rich regions in double-stranded DNA. It is suggested that these proteins could function in nucleosome phasing and in the 3'-end processing of mRNA transcripts. They are also involved in the transcription regulation of genes containing, or in close proximity to A+T-rich regions. The polypeptide is High mobility group protein HMG-I/HMG-Y (HMGA1) (Cricetulus griseus (Chinese hamster)).